Consider the following 223-residue polypeptide: Deoxyribose-phosphate aldolase (223 aa).

The Proton donor/acceptor role is filled by Asp89. The Schiff-base intermediate with acetaldehyde role is filled by Lys152. Residue Lys181 is the Proton donor/acceptor of the active site.

It belongs to the DeoC/FbaB aldolase family. DeoC type 1 subfamily.

The protein resides in the cytoplasm. It carries out the reaction 2-deoxy-D-ribose 5-phosphate = D-glyceraldehyde 3-phosphate + acetaldehyde. Its pathway is carbohydrate degradation; 2-deoxy-D-ribose 1-phosphate degradation; D-glyceraldehyde 3-phosphate and acetaldehyde from 2-deoxy-alpha-D-ribose 1-phosphate: step 2/2. Catalyzes a reversible aldol reaction between acetaldehyde and D-glyceraldehyde 3-phosphate to generate 2-deoxy-D-ribose 5-phosphate. The polypeptide is Deoxyribose-phosphate aldolase (Bacillus mycoides (strain KBAB4) (Bacillus weihenstephanensis)).